The primary structure comprises 571 residues: DM7 family protein CG15332 (571 aa).

A disordered region spans residues 440 to 472; that stretch reads TRDDGINTADYQSQFPELEPEPEPEPEDEGEDV. Over residues 457-471 the composition is skewed to acidic residues; the sequence is LEPEPEPEPEDEGED.

Belongs to the DM7 family.

The protein is DM7 family protein CG15332 of Drosophila melanogaster (Fruit fly).